The primary structure comprises 288 residues: Single myb histone 4 (288 aa).

Disordered regions lie at residues 1–42, 62–87, and 181–206; these read MGAP…PVLS, GLGS…SQPL, and DSLA…KPSK. An HTH myb-type domain is found at 1 to 60; sequence MGAPKQKWTSEEEDALRAGVRKHGAGKWRTIQKDPEFSPVLSSRSNIDLKDKWRNLSFSA. Positions 28 to 56 form a DNA-binding region, H-T-H motif; the sequence is WRTIQKDPEFSPVLSSRSNIDLKDKWRNL. A compositionally biased stretch (low complexity) spans 76–87; that stretch reads PSSSPSSSSQPL. The H15 domain occupies 113–181; it reads TLPKYGAMIM…KIDKSYRLPD (69 aa). Residues 230 to 250 adopt a coiled-coil conformation; it reads KVADAEAKAHDAHDQTMEAER.

It belongs to the histone H1/H5 family. SMH subfamily. Forms a homodimer and heterodimers.

The protein localises to the nucleus. Its subcellular location is the chromosome. It is found in the nucleolus. It localises to the telomere. Its function is as follows. Binds preferentially double-stranded telomeric repeats, but may also bind to the single telomeric strand. In Zea mays (Maize), this protein is Single myb histone 4 (SMH4).